Consider the following 381-residue polypeptide: Succinate--CoA ligase [ADP-forming] subunit beta (381 aa).

In terms of domain architecture, ATP-grasp spans 9–236 (KTIFADAGIP…ESYEDDLERK (228 aa)). ATP is bound by residues Lys-45, 52–54 (GRG), Glu-91, Val-94, and Glu-99. Residues Asn-191 and Asp-205 each coordinate Mg(2+). Residues Asn-256 and 313–315 (GIT) contribute to the substrate site.

This sequence belongs to the succinate/malate CoA ligase beta subunit family. Heterotetramer of two alpha and two beta subunits. It depends on Mg(2+) as a cofactor.

It catalyses the reaction succinate + ATP + CoA = succinyl-CoA + ADP + phosphate. It carries out the reaction GTP + succinate + CoA = succinyl-CoA + GDP + phosphate. It functions in the pathway carbohydrate metabolism; tricarboxylic acid cycle; succinate from succinyl-CoA (ligase route): step 1/1. Succinyl-CoA synthetase functions in the citric acid cycle (TCA), coupling the hydrolysis of succinyl-CoA to the synthesis of either ATP or GTP and thus represents the only step of substrate-level phosphorylation in the TCA. The beta subunit provides nucleotide specificity of the enzyme and binds the substrate succinate, while the binding sites for coenzyme A and phosphate are found in the alpha subunit. This is Succinate--CoA ligase [ADP-forming] subunit beta from Halorubrum lacusprofundi (strain ATCC 49239 / DSM 5036 / JCM 8891 / ACAM 34).